A 284-amino-acid polypeptide reads, in one-letter code: Pantothenate synthetase (284 aa).

30–37 is a binding site for ATP; it reads MGNLHDGH. His-37 (proton donor) is an active-site residue. Gln-61 contacts (R)-pantoate. Beta-alanine is bound at residue Gln-61. 149–152 contacts ATP; the sequence is GEKD. Gln-155 serves as a coordination point for (R)-pantoate. ATP contacts are provided by residues Val-178 and 186-189; that span reads LSSR.

This sequence belongs to the pantothenate synthetase family. In terms of assembly, homodimer.

The protein resides in the cytoplasm. The enzyme catalyses (R)-pantoate + beta-alanine + ATP = (R)-pantothenate + AMP + diphosphate + H(+). Its pathway is cofactor biosynthesis; (R)-pantothenate biosynthesis; (R)-pantothenate from (R)-pantoate and beta-alanine: step 1/1. Its function is as follows. Catalyzes the condensation of pantoate with beta-alanine in an ATP-dependent reaction via a pantoyl-adenylate intermediate. In Erwinia tasmaniensis (strain DSM 17950 / CFBP 7177 / CIP 109463 / NCPPB 4357 / Et1/99), this protein is Pantothenate synthetase.